A 459-amino-acid polypeptide reads, in one-letter code: Putrescine aminotransferase (459 aa).

Residues 150–151 (GT) and Q274 contribute to the pyridoxal 5'-phosphate site. The residue at position 300 (K300) is an N6-(pyridoxal phosphate)lysine. A pyridoxal 5'-phosphate-binding site is contributed by T332.

The protein belongs to the class-III pyridoxal-phosphate-dependent aminotransferase family. Putrescine aminotransferase subfamily. It depends on pyridoxal 5'-phosphate as a cofactor.

The catalysed reaction is an alkane-alpha,omega-diamine + 2-oxoglutarate = an omega-aminoaldehyde + L-glutamate. It catalyses the reaction putrescine + 2-oxoglutarate = 1-pyrroline + L-glutamate + H2O. The enzyme catalyses cadaverine + 2-oxoglutarate = 5-aminopentanal + L-glutamate. Its pathway is amine and polyamine degradation; putrescine degradation; 4-aminobutanal from putrescine (transaminase route): step 1/1. Catalyzes the aminotransferase reaction from putrescine to 2-oxoglutarate, leading to glutamate and 4-aminobutanal, which spontaneously cyclizes to form 1-pyrroline. This is the first step in one of two pathways for putrescine degradation, where putrescine is converted into 4-aminobutanoate (gamma-aminobutyrate or GABA) via 4-aminobutanal. Also functions as a cadaverine transaminase in a a L-lysine degradation pathway to succinate that proceeds via cadaverine, glutarate and L-2-hydroxyglutarate. In Escherichia coli O8 (strain IAI1), this protein is Putrescine aminotransferase.